The following is a 192-amino-acid chain: Imidazoleglycerol-phosphate dehydratase (192 aa).

It belongs to the imidazoleglycerol-phosphate dehydratase family.

The protein localises to the cytoplasm. It catalyses the reaction D-erythro-1-(imidazol-4-yl)glycerol 3-phosphate = 3-(imidazol-4-yl)-2-oxopropyl phosphate + H2O. The protein operates within amino-acid biosynthesis; L-histidine biosynthesis; L-histidine from 5-phospho-alpha-D-ribose 1-diphosphate: step 6/9. The protein is Imidazoleglycerol-phosphate dehydratase of Staphylococcus epidermidis (strain ATCC 35984 / DSM 28319 / BCRC 17069 / CCUG 31568 / BM 3577 / RP62A).